A 445-amino-acid polypeptide reads, in one-letter code: Glutamate--tRNA ligase 2 (445 aa).

Positions 10–20 (PSPTGRLHVGN) match the 'HIGH' region motif. The 'KMSKS' region signature appears at 241-245 (ALSKR). Residue Lys-244 participates in ATP binding.

This sequence belongs to the class-I aminoacyl-tRNA synthetase family. Glutamate--tRNA ligase type 1 subfamily. In terms of assembly, monomer.

It localises to the cytoplasm. It catalyses the reaction tRNA(Glu) + L-glutamate + ATP = L-glutamyl-tRNA(Glu) + AMP + diphosphate. Functionally, catalyzes the attachment of glutamate to tRNA(Glu) in a two-step reaction: glutamate is first activated by ATP to form Glu-AMP and then transferred to the acceptor end of tRNA(Glu). The sequence is that of Glutamate--tRNA ligase 2 from Hyphomonas neptunium (strain ATCC 15444).